A 185-amino-acid chain; its full sequence is Orotate phosphoribosyltransferase (185 aa).

Residues Arg98, Lys99, Lys102, His104, and 128-136 (EDVTTTGGS) contribute to the 5-phospho-alpha-D-ribose 1-diphosphate site. Orotate-binding residues include Thr132 and Arg160.

This sequence belongs to the purine/pyrimidine phosphoribosyltransferase family. PyrE subfamily. As to quaternary structure, homodimer. It depends on Mg(2+) as a cofactor.

It carries out the reaction orotidine 5'-phosphate + diphosphate = orotate + 5-phospho-alpha-D-ribose 1-diphosphate. The protein operates within pyrimidine metabolism; UMP biosynthesis via de novo pathway; UMP from orotate: step 1/2. Functionally, catalyzes the transfer of a ribosyl phosphate group from 5-phosphoribose 1-diphosphate to orotate, leading to the formation of orotidine monophosphate (OMP). The sequence is that of Orotate phosphoribosyltransferase from Bradyrhizobium sp. (strain ORS 278).